A 227-amino-acid chain; its full sequence is Thiamine-phosphate synthase (227 aa).

Residues 46–50 and N87 contribute to the 4-amino-2-methyl-5-(diphosphooxymethyl)pyrimidine site; that span reads QLRDK. 2 residues coordinate Mg(2+): D88 and D107. S126 is a 4-amino-2-methyl-5-(diphosphooxymethyl)pyrimidine binding site. 152 to 154 lines the 2-[(2R,5Z)-2-carboxy-4-methylthiazol-5(2H)-ylidene]ethyl phosphate pocket; it reads TPT. K155 provides a ligand contact to 4-amino-2-methyl-5-(diphosphooxymethyl)pyrimidine. Residue G183 participates in 2-[(2R,5Z)-2-carboxy-4-methylthiazol-5(2H)-ylidene]ethyl phosphate binding.

This sequence belongs to the thiamine-phosphate synthase family. Mg(2+) is required as a cofactor.

The catalysed reaction is 2-[(2R,5Z)-2-carboxy-4-methylthiazol-5(2H)-ylidene]ethyl phosphate + 4-amino-2-methyl-5-(diphosphooxymethyl)pyrimidine + 2 H(+) = thiamine phosphate + CO2 + diphosphate. It catalyses the reaction 2-(2-carboxy-4-methylthiazol-5-yl)ethyl phosphate + 4-amino-2-methyl-5-(diphosphooxymethyl)pyrimidine + 2 H(+) = thiamine phosphate + CO2 + diphosphate. It carries out the reaction 4-methyl-5-(2-phosphooxyethyl)-thiazole + 4-amino-2-methyl-5-(diphosphooxymethyl)pyrimidine + H(+) = thiamine phosphate + diphosphate. Its pathway is cofactor biosynthesis; thiamine diphosphate biosynthesis; thiamine phosphate from 4-amino-2-methyl-5-diphosphomethylpyrimidine and 4-methyl-5-(2-phosphoethyl)-thiazole: step 1/1. Functionally, condenses 4-methyl-5-(beta-hydroxyethyl)thiazole monophosphate (THZ-P) and 2-methyl-4-amino-5-hydroxymethyl pyrimidine pyrophosphate (HMP-PP) to form thiamine monophosphate (TMP). The chain is Thiamine-phosphate synthase from Mycolicibacterium smegmatis (strain ATCC 700084 / mc(2)155) (Mycobacterium smegmatis).